The primary structure comprises 316 residues: Phosphoribosylaminoimidazole-succinocarboxamide synthase (316 aa).

The protein belongs to the SAICAR synthetase family.

It catalyses the reaction 5-amino-1-(5-phospho-D-ribosyl)imidazole-4-carboxylate + L-aspartate + ATP = (2S)-2-[5-amino-1-(5-phospho-beta-D-ribosyl)imidazole-4-carboxamido]succinate + ADP + phosphate + 2 H(+). It participates in purine metabolism; IMP biosynthesis via de novo pathway; 5-amino-1-(5-phospho-D-ribosyl)imidazole-4-carboxamide from 5-amino-1-(5-phospho-D-ribosyl)imidazole-4-carboxylate: step 1/2. This Flavobacterium psychrophilum (strain ATCC 49511 / DSM 21280 / CIP 103535 / JIP02/86) protein is Phosphoribosylaminoimidazole-succinocarboxamide synthase.